The primary structure comprises 254 residues: Leucyl/phenylalanyl-tRNA--protein transferase (254 aa).

The protein belongs to the L/F-transferase family.

The protein localises to the cytoplasm. It catalyses the reaction N-terminal L-lysyl-[protein] + L-leucyl-tRNA(Leu) = N-terminal L-leucyl-L-lysyl-[protein] + tRNA(Leu) + H(+). It carries out the reaction N-terminal L-arginyl-[protein] + L-leucyl-tRNA(Leu) = N-terminal L-leucyl-L-arginyl-[protein] + tRNA(Leu) + H(+). The enzyme catalyses L-phenylalanyl-tRNA(Phe) + an N-terminal L-alpha-aminoacyl-[protein] = an N-terminal L-phenylalanyl-L-alpha-aminoacyl-[protein] + tRNA(Phe). Its function is as follows. Functions in the N-end rule pathway of protein degradation where it conjugates Leu, Phe and, less efficiently, Met from aminoacyl-tRNAs to the N-termini of proteins containing an N-terminal arginine or lysine. The chain is Leucyl/phenylalanyl-tRNA--protein transferase from Burkholderia orbicola (strain MC0-3).